The following is an 842-amino-acid chain: uncharacterized protein (842 aa).

Disordered stretches follow at residues 1–20 (MLHF…SPKE) and 142–209 (NSSS…TSSS). Residues 35–422 (TKDVTFRLVL…TAKSFHKCIL (388 aa)) form the uDENN FNIP1/2-type domain. Positions 183–209 (ANLSSSSKNMKDSTLSSQKARSNTSSS) are enriched in polar residues. In terms of domain architecture, cDENN FNIP1/2-type spans 430 to 772 (APLIKPSVFS…CYEIHEFPSE (343 aa)). 2 positions are modified to phosphoserine: S573 and S590. Residues 777–842 (YAPFLLKEHH…KEVLRVCSHC (66 aa)) form the dDENN FNIP1/2-type domain.

The protein localises to the cytoplasm. This is an uncharacterized protein from Schizosaccharomyces pombe (strain 972 / ATCC 24843) (Fission yeast).